Consider the following 217-residue polypeptide: Pyrophosphatase PpaX (217 aa).

The Nucleophile role is filled by aspartate 11.

It belongs to the HAD-like hydrolase superfamily. PpaX family. Mg(2+) serves as cofactor.

It catalyses the reaction diphosphate + H2O = 2 phosphate + H(+). Functionally, hydrolyzes pyrophosphate formed during P-Ser-HPr dephosphorylation by HPrK/P. Might play a role in controlling the intracellular pyrophosphate pool. This is Pyrophosphatase PpaX from Listeria welshimeri serovar 6b (strain ATCC 35897 / DSM 20650 / CCUG 15529 / CIP 8149 / NCTC 11857 / SLCC 5334 / V8).